Consider the following 579-residue polypeptide: Nuclear receptor coactivator 5 (579 aa).

N-acetylmethionine is present on Met-1. Residues 1–78 (MNTAPSRPSP…LRDHRDSRSV (78 aa)) are disordered. The interval 1–158 (MNTAPSRPSP…RDSFDGRGPP (158 aa)) is transcription repression. Thr-3 is subject to Phosphothreonine. Phosphoserine is present on residues Ser-9, Ser-21, Ser-24, Ser-29, and Ser-34. Basic and acidic residues-rich tracts occupy residues 11-62 (TRRD…DLRD) and 68-78 (DLRDHRDSRSV). Residues Ser-96, Ser-116, Ser-126, Ser-143, and Ser-151 each carry the phosphoserine modification. Residues 148 to 173 (YRDSFDGRGPPGPESQSRAKERLKRE) are disordered. A compositionally biased stretch (basic and acidic residues) spans 164 to 173 (SRAKERLKRE). At Thr-274 the chain carries Phosphothreonine. The short motif at 345-349 (LINLL) is the LXXLL motif element. Disordered stretches follow at residues 375–428 (MRSS…PTSQ), 444–537 (VTAN…NFDN), and 560–579 (QTTA…QRHY). Position 378 is a phosphoserine (Ser-378). At Thr-379 the chain carries Phosphothreonine. Ser-381 is subject to Phosphoserine. The segment covering 395–413 (SGASLKTQPSSQPLQSGQV) has biased composition (polar residues). A compositionally biased stretch (low complexity) spans 446–457 (ANSSSASPSVAA). A transcription activation region spans residues 458-579 (GNTPNQNFST…APMGSYQRHY (122 aa)). Polar residues-rich tracts occupy residues 459 to 485 (NTPN…NQPP) and 520 to 537 (SNMT…NFDN).

As to quaternary structure, binds HTATIP2/TIP30. Interacts with YLPM1. Forms a complex with ILF2, ILF3, YLPM1, KHDRBS1, RBMX and PPP1CA. In terms of tissue distribution, widely expressed.

The protein localises to the nucleus. Functionally, nuclear receptor coregulator that can have both coactivator and corepressor functions. Interacts with nuclear receptors for steroids (ESR1 and ESR2) independently of the steroid binding domain (AF-2) of the ESR receptors, and with the orphan nuclear receptor NR1D2. Involved in the coactivation of nuclear steroid receptors (ER) as well as the corepression of MYC in response to 17-beta-estradiol (E2). The sequence is that of Nuclear receptor coactivator 5 (NCOA5) from Homo sapiens (Human).